The primary structure comprises 458 residues: O-acetyltransferase dmxR13 (458 aa).

The interval 211 to 231 is disordered; it reads ELARQISQPRPPPSSDGPPPP. The segment covering 219–231 has biased composition (pro residues); it reads PRPPPSSDGPPPP.

It belongs to the trichothecene 3-O-acetyltransferase family.

Its pathway is secondary metabolite biosynthesis. Functionally, O-acetyltransferase; part of the gene cluster that mediates the biosynthesis of the dimeric xanthones cryptosporioptides. The pathway begins with the synthesis of atrochrysone thioester by the polyketide synthase dmx-nrPKS. The atrochrysone carboxyl ACP thioesterase dmxR1 then breaks the thioester bond and releases the atrochrysone carboxylic acid from dmx-nrPKS. Atrochrysone carboxylic acid is decarboxylated by the decarboxylase dmxR15, and oxidized by the anthrone oxygenase dmxR16 to yield emodin. Emodin is then reduced to emodin hydroquinone by the oxidoreductase dmxR7. A-ring reduction by the short chain dehydrogenase dmxR18, dehydration by the scytalone dehydratase-like protein dmxR17 and probable spontaneous re-oxidation, results in overall deoxygenation to chrysophanol. Baeyer-Villiger oxidation by the Baeyer-Villiger monooxygenase (BVMO) dmxR6 then yields monodictylactone in equilibrium with monodictyphenone. In the case of the cryptosporioptides biosynthesis, monodictylactone is reduced at C-12 to an alcohol (by the short chain dehydrogenases dmxR12 or dmxR8) and hydroxylated at C-5 by dmxR9, yielding the electron-rich aromatic which could eliminate H(2)O to form the ortho-quinonemethide, followed by tautomerisation to paraquinone and complete the formal reduction to produce the 10-methylgroup. Conjugate addition of C-4a-OH to the resulting paraquinone by the monooxygenase dmxR10 then gives cyclohexadienone, which is then reduced at C-5 by the short chain dehydrogenase dmxR3 to give the dihydroxanthone. The 6,7-epoxide in the cryptosporioptides could be introduced by the cytochrome P450 monooxygenase dmxL3. The highly reducing PKS dmxL2 manufactures butyrate, which is further carboxylated by dmxL1 to form ethylmalonate. It is not yet clear whether the carboxylation occurs while the butyrate is attached to the ACP of dmxL2, but this unusual fungal metabolite could then be esterified to O-5 by the O-acetyltransferase dmxR13. Finally, dimerization performed by dmxR5 gives the observed dimers cryptosporioptides A, B and C as the final products of the pathway. In Cryptosporiopsis sp. (strain 8999), this protein is O-acetyltransferase dmxR13.